The following is a 234-amino-acid chain: FAS1 domain-containing protein AFUA_8G05360 (234 aa).

The N-terminal stretch at 1–21 is a signal peptide; it reads MRRTLFVLFVVAFCFIGSVIA. The FAS1 domain occupies 83–231; sequence KPVVSDVLPK…GELWILNSVL (149 aa).

Its subcellular location is the vacuole. This chain is FAS1 domain-containing protein AFUA_8G05360, found in Aspergillus fumigatus (strain ATCC MYA-4609 / CBS 101355 / FGSC A1100 / Af293) (Neosartorya fumigata).